Reading from the N-terminus, the 313-residue chain is Methionyl-tRNA formyltransferase (313 aa).

(6S)-5,6,7,8-tetrahydrofolate is bound at residue S110 to P113.

This sequence belongs to the Fmt family.

The enzyme catalyses L-methionyl-tRNA(fMet) + (6R)-10-formyltetrahydrofolate = N-formyl-L-methionyl-tRNA(fMet) + (6S)-5,6,7,8-tetrahydrofolate + H(+). Attaches a formyl group to the free amino group of methionyl-tRNA(fMet). The formyl group appears to play a dual role in the initiator identity of N-formylmethionyl-tRNA by promoting its recognition by IF2 and preventing the misappropriation of this tRNA by the elongation apparatus. This Enterococcus faecalis (strain ATCC 700802 / V583) protein is Methionyl-tRNA formyltransferase.